Consider the following 1117-residue polypeptide: Protocadherin-11 X-linked (1117 aa).

Positions 1 to 23 (MDLLSGTHIFAVLLACIVFQSGA) are cleaved as a signal peptide. Topologically, residues 24–812 (QEKNYTIREE…ASSPSSDYVK (789 aa)) are extracellular. Residues Asn-27 and Asn-48 are each glycosylated (N-linked (GlcNAc...) asparagine). Cadherin domains lie at 27 to 139 (NYTI…APLF), 140 to 249 (PATV…RPVF), 250 to 355 (KENE…IPSI), 362 to 466 (NPIN…APVF), 467 to 570 (TQPF…SPVF), 571 to 673 (THNE…KPVF), and 677 to 795 (SSNY…TPVT). Residue Asn-344 is glycosylated (N-linked (GlcNAc...) asparagine). A glycan (N-linked (GlcNAc...) asparagine) is linked at Asn-553. A helical membrane pass occupies residues 813–833 (IVVAIVAGTITVILVIFITAV). Residues 834 to 1117 (VRCQQSPHLK…DGNSDPESGK (284 aa)) are Cytoplasmic-facing. Residues 1029–1039 (TVEIWTHPQPQ) show a composition bias toward polar residues. Residues 1029-1117 (TVEIWTHPQP…DGNSDPESGK (89 aa)) form a disordered region.

As to expression, expressed in adrenal gland, brain, heart, kidney, lung, prostate, skeletal muscle, testis and thymus.

The protein localises to the cell membrane. Its function is as follows. Potential calcium-dependent cell-adhesion protein. The chain is Protocadherin-11 X-linked (PCDH11X) from Sus scrofa (Pig).